The chain runs to 495 residues: Glutamyl-tRNA(Gln) amidotransferase subunit A (495 aa).

Residues lysine 78 and serine 158 each act as charge relay system in the active site. The active-site Acyl-ester intermediate is serine 182.

The protein belongs to the amidase family. GatA subfamily. Heterotrimer of A, B and C subunits.

The enzyme catalyses L-glutamyl-tRNA(Gln) + L-glutamine + ATP + H2O = L-glutaminyl-tRNA(Gln) + L-glutamate + ADP + phosphate + H(+). In terms of biological role, allows the formation of correctly charged Gln-tRNA(Gln) through the transamidation of misacylated Glu-tRNA(Gln) in organisms which lack glutaminyl-tRNA synthetase. The reaction takes place in the presence of glutamine and ATP through an activated gamma-phospho-Glu-tRNA(Gln). In Ruegeria sp. (strain TM1040) (Silicibacter sp.), this protein is Glutamyl-tRNA(Gln) amidotransferase subunit A.